Here is a 220-residue protein sequence, read N- to C-terminus: Deoxyribose-phosphate aldolase (220 aa).

Asp89 functions as the Proton donor/acceptor in the catalytic mechanism. The Schiff-base intermediate with acetaldehyde role is filled by Lys151. The active-site Proton donor/acceptor is the Lys180.

It belongs to the DeoC/FbaB aldolase family. DeoC type 1 subfamily.

It is found in the cytoplasm. The enzyme catalyses 2-deoxy-D-ribose 5-phosphate = D-glyceraldehyde 3-phosphate + acetaldehyde. It functions in the pathway carbohydrate degradation; 2-deoxy-D-ribose 1-phosphate degradation; D-glyceraldehyde 3-phosphate and acetaldehyde from 2-deoxy-alpha-D-ribose 1-phosphate: step 2/2. Its function is as follows. Catalyzes a reversible aldol reaction between acetaldehyde and D-glyceraldehyde 3-phosphate to generate 2-deoxy-D-ribose 5-phosphate. The sequence is that of Deoxyribose-phosphate aldolase from Streptococcus pneumoniae serotype 2 (strain D39 / NCTC 7466).